Reading from the N-terminus, the 173-residue chain is Alpha-crystallin A chain (173 aa).

Met1 is modified (N-acetylmethionine). Positions 1–63 (MDVTIQHPWF…RTVLDSGISE (63 aa)) are required for complex formation with BFSP1 and BFSP2; during homooligomerization, mediates the association of 2 dimers to form a tetramer. Residue Gln6 is modified to Deamidated glutamine; partial. At Ser45 the chain carries Phosphoserine. A Deamidated glutamine; partial modification is found at Gln50. Positions 52 to 164 (LFRTVLDSGI…AERAIPVSRE (113 aa)) constitute a sHSP domain. Lys70 is subject to N6-acetyllysine. Deamidated glutamine; partial is present on Gln90. N6-acetyllysine is present on Lys99. His100 is a Zn(2+) binding site. Asn101 is modified (deamidated asparagine; partial). Zn(2+) contacts are provided by Glu102 and His107. Phosphoserine is present on Ser122. Position 123 is a deamidated asparagine; partial (Asn123). A disulfide bridge connects residues Cys131 and Cys142. Deamidated glutamine; partial is present on Gln147. His154 provides a ligand contact to Zn(2+). O-linked (GlcNAc) serine glycosylation is present at Ser162.

It belongs to the small heat shock protein (HSP20) family. Heteropolymer composed of three CRYAA and one CRYAB subunits. Inter-subunit bridging via zinc ions enhances stability, which is crucial as there is no protein turn over in the lens. Can also form homodimers and homotetramers (dimers of dimers) which serve as the building blocks of homooligomers. Within homooligomers, the zinc-binding motif is created from residues of 3 different molecules. His-100 and Glu-102 from one molecule are ligands of the zinc ion, and His-107 and His-154 residues from additional molecules complete the site with tetrahedral coordination geometry. Part of a complex required for lens intermediate filament formation composed of BFSP1, BFSP2 and CRYAA. In terms of processing, O-glycosylated; contains N-acetylglucosamine side chains. Post-translationally, deamidation of Asn-101 in lens occurs mostly during the first 30 years of age, followed by a small additional amount of deamidation (approximately 5%) during the next approximately 38 years, resulting in a maximum of approximately 50% deamidation during the lifetime of the individual. Phosphorylation on Ser-122 seems to be developmentally regulated. Absent in the first months of life, it appears during the first 12 years of human lifetime. The relative amount of phosphorylated form versus unphosphorylated form does not change over the lifetime of the individual. In terms of processing, acetylation at Lys-70 may increase chaperone activity. Post-translationally, undergoes age-dependent proteolytical cleavage at the C-terminus. Alpha-crystallin A(1-172) is the most predominant form produced most rapidly during the first 12 years of age and after this age is present in approximately 50% of the lens molecules. In young individuals and during the first approximately 30 years of life, less than half molecules contain an intramolecular disulfide bond (oxidized form), while in the remaining fraction the cysteines are in the free sulfhydryl form (reduced form). With aging, the amount of oxidized form increases up to 90% and it becomes a major constituent of high molecular weight aggregates, concomitant with an age-dependent loss of its chaperone activity. The reduced form is undetectable in cataractous lenses. In terms of tissue distribution, expressed in the eye lens (at protein level).

Its subcellular location is the cytoplasm. The protein localises to the nucleus. In terms of biological role, contributes to the transparency and refractive index of the lens. In its oxidized form (absence of intramolecular disulfide bond), acts as a chaperone, preventing aggregation of various proteins under a wide range of stress conditions. Required for the correct formation of lens intermediate filaments as part of a complex composed of BFSP1, BFSP2 and CRYAA. This is Alpha-crystallin A chain (CRYAA) from Homo sapiens (Human).